Consider the following 487-residue polypeptide: MNEMSKSEITDKKKRYAAGVLKYAQMGYWDGDYQPKDTDILALFRITPQDGVDPIEAAAAVAGESSTATWTVVWTDRLTACDQYRAKAYKVEPVPGQEGQYFCYVAYDLILFEEGSIANVTASIIGNVFSFKPLLAARLEDMRFPVAYMKTFAGPPTGIVVERERLDKFGRPLLGATTKPKLGLSGKNYGRVVYEGLKGGLDFMKDDENINSQPFMHWRDRFLYCMEAVNKATAVTGEVKGHYLNITAGTMEEMYRRAELAKELGSVIVMVDLIVGWTAIQSISNWCRQNDMILHMHRAGHGTYTRQKNHGISFRVIAKWLRMAGVDHLHCGTAVGKLEGDPLTVQGYYNTCREMVNEVDLPRGIFFEQDWGNLKKVMPVASGGIHAGQMHQLLDLFGDDVVLQFGGGTIGHPMGIQAGATANRVALEAMVLARNEGVDLKTEGPEVLRRAAKWCKPLEAALDVWGNITFNYTSTDTSDFVPTASVS.

Residues asparagine 127 and threonine 177 each coordinate substrate. Lysine 179 (proton acceptor) is an active-site residue. Residue lysine 181 participates in substrate binding. 3 residues coordinate Mg(2+): lysine 205, aspartate 207, and glutamate 208. Residue lysine 205 is modified to N6-carboxylysine. Histidine 297 (proton acceptor) is an active-site residue. Residues arginine 298, histidine 330, and serine 382 each coordinate substrate.

Belongs to the RuBisCO large chain family. Type I subfamily. In terms of assembly, heterohexadecamer of 8 large chains and 8 small chains. Mg(2+) is required as a cofactor.

It carries out the reaction 2 (2R)-3-phosphoglycerate + 2 H(+) = D-ribulose 1,5-bisphosphate + CO2 + H2O. It catalyses the reaction D-ribulose 1,5-bisphosphate + O2 = 2-phosphoglycolate + (2R)-3-phosphoglycerate + 2 H(+). In terms of biological role, ruBisCO catalyzes two reactions: the carboxylation of D-ribulose 1,5-bisphosphate, the primary event in carbon dioxide fixation, as well as the oxidative fragmentation of the pentose substrate. Both reactions occur simultaneously and in competition at the same active site. The polypeptide is Ribulose bisphosphate carboxylase large chain (Paracoccus denitrificans (strain Pd 1222)).